The primary structure comprises 345 residues: Pyruvate dehydrogenase E1 component subunit alpha (345 aa).

In terms of assembly, heterodimer of an alpha and a beta chain. Thiamine diphosphate serves as cofactor.

The enzyme catalyses N(6)-[(R)-lipoyl]-L-lysyl-[protein] + pyruvate + H(+) = N(6)-[(R)-S(8)-acetyldihydrolipoyl]-L-lysyl-[protein] + CO2. Functionally, the pyruvate dehydrogenase complex catalyzes the overall conversion of pyruvate to acetyl-CoA and CO(2). It contains multiple copies of three enzymatic components: pyruvate dehydrogenase (E1), dihydrolipoamide acetyltransferase (E2) and lipoamide dehydrogenase (E3). The polypeptide is Pyruvate dehydrogenase E1 component subunit alpha (pdhA) (Acholeplasma laidlawii).